The primary structure comprises 171 residues: 3-hydroxydecanoyl-[acyl-carrier-protein] dehydratase (171 aa).

Histidine 70 is an active-site residue.

It belongs to the thioester dehydratase family. FabA subfamily. In terms of assembly, homodimer.

The protein resides in the cytoplasm. The catalysed reaction is a (3R)-hydroxyacyl-[ACP] = a (2E)-enoyl-[ACP] + H2O. The enzyme catalyses (3R)-hydroxydecanoyl-[ACP] = (2E)-decenoyl-[ACP] + H2O. It catalyses the reaction (2E)-decenoyl-[ACP] = (3Z)-decenoyl-[ACP]. Its pathway is lipid metabolism; fatty acid biosynthesis. Functionally, necessary for the introduction of cis unsaturation into fatty acids. Catalyzes the dehydration of (3R)-3-hydroxydecanoyl-ACP to E-(2)-decenoyl-ACP and then its isomerization to Z-(3)-decenoyl-ACP. Can catalyze the dehydratase reaction for beta-hydroxyacyl-ACPs with saturated chain lengths up to 16:0, being most active on intermediate chain length. The protein is 3-hydroxydecanoyl-[acyl-carrier-protein] dehydratase of Histophilus somni (strain 129Pt) (Haemophilus somnus).